Consider the following 115-residue polypeptide: Small ribosomal subunit protein uS13 (115 aa).

The tract at residues 92-115 (RRGLPVRGQNTKNNARTRKGSKRK) is disordered. Over residues 106-115 (ARTRKGSKRK) the composition is skewed to basic residues.

This sequence belongs to the universal ribosomal protein uS13 family. In terms of assembly, part of the 30S ribosomal subunit. Forms a loose heterodimer with protein S19. Forms two bridges to the 50S subunit in the 70S ribosome.

In terms of biological role, located at the top of the head of the 30S subunit, it contacts several helices of the 16S rRNA. In the 70S ribosome it contacts the 23S rRNA (bridge B1a) and protein L5 of the 50S subunit (bridge B1b), connecting the 2 subunits; these bridges are implicated in subunit movement. Contacts the tRNAs in the A and P-sites. In Lactobacillus gasseri (strain ATCC 33323 / DSM 20243 / BCRC 14619 / CIP 102991 / JCM 1131 / KCTC 3163 / NCIMB 11718 / NCTC 13722 / AM63), this protein is Small ribosomal subunit protein uS13.